Here is a 359-residue protein sequence, read N- to C-terminus: MNAPLAGIWPWLPLLWAWLVPEVSSSWWYMRATGTSRVMCDNVPGLVSRQRQLCHRHPDVMRAIGLGVAEWTAECQHQFRQHRWNCDTLDRDHSLFGRLLLRSSRESAFVYAISSAGVVFAITRACSQGELKSCSCDPKKKGTAKDSRGTFDWGGCSDNIDYGVKFARAFVDAKEKKGKDARALMNLHNNRAGRKAVKRFLKQECKCHGVSGSCTLRTCWLAMADFRKTGDYLWRKYNGAIQVVMNQDGTGFTVANKRFKKPTKNDLVYFENSPDYCIRDRDAGSPGTAGRVCNLTSRGMDSCEVMCCGRGYDTSRVTRMTKCECKFHWCCAVRCQDCLEALDVHTCKAPKSADWAVPT.

The first 25 residues, 1-25, serve as a signal peptide directing secretion; the sequence is MNAPLAGIWPWLPLLWAWLVPEVSS. Disulfide bonds link cysteine 75/cysteine 86, cysteine 126/cysteine 134, cysteine 136/cysteine 156, cysteine 205/cysteine 219, cysteine 207/cysteine 214, cysteine 277/cysteine 308, cysteine 293/cysteine 303, cysteine 307/cysteine 347, cysteine 323/cysteine 338, cysteine 325/cysteine 335, and cysteine 330/cysteine 331. Serine 211 is lipidated: O-palmitoleoyl serine; by PORCN. Asparagine 294 is a glycosylation site (N-linked (GlcNAc...) asparagine).

It belongs to the Wnt family. In terms of processing, palmitoleoylation is required for efficient binding to frizzled receptors. Depalmitoleoylation leads to Wnt signaling pathway inhibition.

Its subcellular location is the secreted. The protein resides in the extracellular space. It is found in the extracellular matrix. In terms of biological role, ligand for members of the frizzled family of seven transmembrane receptors. Probable developmental protein. May be a signaling molecule which affects the development of discrete regions of tissues. Is likely to signal over only few cell diameters. The protein is Protein Wnt-2 (WNT2) of Echinops telfairi (Lesser hedgehog tenrec).